A 99-amino-acid polypeptide reads, in one-letter code: Acylphosphatase (99 aa).

The 93-residue stretch at 5-97 folds into the Acylphosphatase-like domain; that stretch reads IRQVMVRGRV…YAGERFSILS (93 aa). Active-site residues include R20 and N38.

Belongs to the acylphosphatase family.

The enzyme catalyses an acyl phosphate + H2O = a carboxylate + phosphate + H(+). In Rhodopseudomonas palustris (strain BisB5), this protein is Acylphosphatase (acyP).